A 316-amino-acid chain; its full sequence is tRNA pseudouridine synthase B (316 aa).

D38 acts as the Nucleophile in catalysis. Residues 238 to 312 (YPEVIVKSSA…PVCVLARQAG (75 aa)) form the PUA domain.

The protein belongs to the pseudouridine synthase TruB family. Type 1 subfamily.

The catalysed reaction is uridine(55) in tRNA = pseudouridine(55) in tRNA. Functionally, responsible for synthesis of pseudouridine from uracil-55 in the psi GC loop of transfer RNAs. In Pelotomaculum thermopropionicum (strain DSM 13744 / JCM 10971 / SI), this protein is tRNA pseudouridine synthase B.